A 633-amino-acid polypeptide reads, in one-letter code: Protein BZZ1 (633 aa).

Residues 5 to 271 (LSIGNEIKDS…VVKQNKPSLN (267 aa)) form the F-BAR domain. A coiled-coil region spans residues 138–210 (DMVNKKDNIY…INQANRTKDK (73 aa)). Phosphoserine occurs at positions 327, 463, 472, and 476. The disordered stretch occupies residues 429–495 (VDSKPSSGGS…KKTTQNSSDD (67 aa)). Residues 474 to 493 (NNSIRTTSTNNTKKTTQNSS) show a composition bias toward low complexity. 2 SH3 domains span residues 493-555 (SDDG…ISSA) and 577-633 (LPVR…SYCK).

The protein belongs to the BZZ1 family. As to quaternary structure, interacts with LAS17 and MYO5.

It localises to the cytoplasm. Its subcellular location is the cytoskeleton. The protein localises to the actin patch. Its function is as follows. Plays a role in endocytosis and trafficking to the vacuole. Functions with type I myosins to restore polarity of the actin cytoskeleton after NaCl stress. In Saccharomyces cerevisiae (strain ATCC 204508 / S288c) (Baker's yeast), this protein is Protein BZZ1 (BZZ1).